We begin with the raw amino-acid sequence, 80 residues long: CDC42 small effector protein 1 (80 aa).

2 S-palmitoyl cysteine lipidation sites follow: cysteine 10 and cysteine 11. A CRIB domain is found at 30-43 (IGEPMNFVHLTHIG). Residues 48–80 (GAGDGLAMTGAVQEQMRSKGNHRDRPWSNSRAL) form a disordered region.

This sequence belongs to the CDC42SE/SPEC family. As to quaternary structure, interacts with CDC42 (in GTP-bound form). Interacts weakly with RAC1 and not at all with RHOA.

The protein resides in the cytoplasm. It localises to the cytoskeleton. The protein localises to the cell membrane. In terms of biological role, probably involved in the organization of the actin cytoskeleton by acting downstream of CDC42, inducing actin filament assembly. Alters CDC42-induced cell shape changes. In activated T-cells, may play a role in CDC42-mediated F-actin accumulation at the immunological synapse. May play a role in early contractile events in phagocytosis in macrophages. In Mus musculus (Mouse), this protein is CDC42 small effector protein 1 (Cdc42se1).